Reading from the N-terminus, the 357-residue chain is NADH-quinone oxidoreductase subunit H (357 aa).

A run of 8 helical transmembrane segments spans residues 20 to 40 (WLVV…ILCV), 92 to 112 (ILFI…WAVV), 127 to 147 (LLYV…AGWA), 165 to 185 (VSYE…SGSL), 206 to 226 (FLSW…ISAV), 268 to 288 (ILLS…PIDI), 294 to 314 (IPGW…FIWF), and 329 to 349 (LGWK…AIWM).

It belongs to the complex I subunit 1 family. As to quaternary structure, NDH-1 is composed of 14 different subunits. Subunits NuoA, H, J, K, L, M, N constitute the membrane sector of the complex.

Its subcellular location is the cell inner membrane. It carries out the reaction a quinone + NADH + 5 H(+)(in) = a quinol + NAD(+) + 4 H(+)(out). In terms of biological role, NDH-1 shuttles electrons from NADH, via FMN and iron-sulfur (Fe-S) centers, to quinones in the respiratory chain. The immediate electron acceptor for the enzyme in this species is believed to be ubiquinone. Couples the redox reaction to proton translocation (for every two electrons transferred, four hydrogen ions are translocated across the cytoplasmic membrane), and thus conserves the redox energy in a proton gradient. This subunit may bind ubiquinone. The sequence is that of NADH-quinone oxidoreductase subunit H from Bordetella avium (strain 197N).